The following is a 323-amino-acid chain: DNA repair and recombination protein RadA (323 aa).

115 to 122 (GEFGSGKT) serves as a coordination point for ATP.

The protein belongs to the eukaryotic RecA-like protein family.

Its function is as follows. Involved in DNA repair and in homologous recombination. Binds and assemble on single-stranded DNA to form a nucleoprotein filament. Hydrolyzes ATP in a ssDNA-dependent manner and promotes DNA strand exchange between homologous DNA molecules. The chain is DNA repair and recombination protein RadA from Thermoplasma volcanium (strain ATCC 51530 / DSM 4299 / JCM 9571 / NBRC 15438 / GSS1).